Here is a 282-residue protein sequence, read N- to C-terminus: MNLFQAIILGIVQGLTEFLPISSSAHLRIVPALAGWDDPGAAFTAIVQIGTLAAVLIYFMKDIISIVGAVVSDLLKGKPLASDESRTGWMIAAGTIPIVVFGLAFKDDIETTLRSLYWVSAALIALALVLSIAEKHTSNRARQGRRGKAISEITWLDAMIIGFAQAMALIPGSSRSGVTITAGLFRNLDRETSARFSFLLSLPSVFAAGIYQLYKTWDVITASTDNMINIAVATVFAFIFGYLSIAFLLTYLKRHSTGIFIGYRLLLGISLIIMIGTGHLMP.

A run of 7 helical transmembrane segments spans residues 40–60, 89–109, 113–133, 150–170, 196–216, 230–250, and 258–278; these read GAAFTAIVQIGTLAAVLIYFM, WMIAAGTIPIVVFGLAFKDDI, LRSLYWVSAALIALALVLSIA, ISEITWLDAMIIGFAQAMALI, FSFLLSLPSVFAAGIYQLYKT, IAVATVFAFIFGYLSIAFLLT, and GIFIGYRLLLGISLIIMIGTG.

Belongs to the UppP family.

It is found in the cell inner membrane. It carries out the reaction di-trans,octa-cis-undecaprenyl diphosphate + H2O = di-trans,octa-cis-undecaprenyl phosphate + phosphate + H(+). Its function is as follows. Catalyzes the dephosphorylation of undecaprenyl diphosphate (UPP). Confers resistance to bacitracin. The polypeptide is Undecaprenyl-diphosphatase (Chlorobaculum parvum (strain DSM 263 / NCIMB 8327) (Chlorobium vibrioforme subsp. thiosulfatophilum)).